The primary structure comprises 415 residues: Serine hydroxymethyltransferase (415 aa).

(6S)-5,6,7,8-tetrahydrofolate-binding positions include Leu-119 and 123 to 125; that span reads GHL. The residue at position 228 (Lys-228) is an N6-(pyridoxal phosphate)lysine. 353-355 lines the (6S)-5,6,7,8-tetrahydrofolate pocket; that stretch reads SPF.

This sequence belongs to the SHMT family. In terms of assembly, homodimer. It depends on pyridoxal 5'-phosphate as a cofactor.

It is found in the cytoplasm. The enzyme catalyses (6R)-5,10-methylene-5,6,7,8-tetrahydrofolate + glycine + H2O = (6S)-5,6,7,8-tetrahydrofolate + L-serine. It participates in one-carbon metabolism; tetrahydrofolate interconversion. It functions in the pathway amino-acid biosynthesis; glycine biosynthesis; glycine from L-serine: step 1/1. Catalyzes the reversible interconversion of serine and glycine with tetrahydrofolate (THF) serving as the one-carbon carrier. Also exhibits THF-independent aldolase activity toward beta-hydroxyamino acids, producing glycine and aldehydes, via a retro-aldol mechanism. This is Serine hydroxymethyltransferase from Halorubrum lacusprofundi (strain ATCC 49239 / DSM 5036 / JCM 8891 / ACAM 34).